The following is a 317-amino-acid chain: MTSSTKSSFVLGHRHLLGIEGLSVADITGLLDLSEEYVELNRQVDKKRTSLRGRTQINLFFEASTRTQSSFEIAGKRLGADVMNMSVSSMSTRKGETLVDTAMTLNAMHPDILVMRHSASGAVELLARKVDGSVINAGDGAHEHPTQALLDALTIRRNKGRLDGLLVAICGDVLHSRVARSNIILLNAMGARVRVVAPSTLLPPGIERMGVEVARDMREGLDGADIVMMLRLQRERMSGSFVPSVSEYFHYFGLDQKKLAYAKPDALVMHPGPMNRGVEIDSIVADGAQSLIREQVEMGVAVRMAVLEALARNLPNA.

The carbamoyl phosphate site is built by Arg-66 and Thr-67. An L-aspartate-binding site is contributed by Lys-94. Carbamoyl phosphate-binding residues include Arg-116, His-144, and Gln-147. Residues Arg-177 and Arg-231 each coordinate L-aspartate. Residues Gly-272 and Pro-273 each contribute to the carbamoyl phosphate site.

The protein belongs to the aspartate/ornithine carbamoyltransferase superfamily. ATCase family. In terms of assembly, heterododecamer (2C3:3R2) of six catalytic PyrB chains organized as two trimers (C3), and six regulatory PyrI chains organized as three dimers (R2).

It carries out the reaction carbamoyl phosphate + L-aspartate = N-carbamoyl-L-aspartate + phosphate + H(+). It functions in the pathway pyrimidine metabolism; UMP biosynthesis via de novo pathway; (S)-dihydroorotate from bicarbonate: step 2/3. Functionally, catalyzes the condensation of carbamoyl phosphate and aspartate to form carbamoyl aspartate and inorganic phosphate, the committed step in the de novo pyrimidine nucleotide biosynthesis pathway. In Nitrobacter hamburgensis (strain DSM 10229 / NCIMB 13809 / X14), this protein is Aspartate carbamoyltransferase catalytic subunit.